A 178-amino-acid chain; its full sequence is MPKKEVVDAVTMKRALTRISYEIIERNKGIQDIVLVGIKTRGIYIAQRLAERLKQLEDIDVPVGELDITLYRDDVKDMEEPELHSSDVPVSIEGKEVILVDDVLYTGRTIRAAMDAVMDLGRPRKISLAVLVDRGHRELPIRADYVGKNIPTSKTEEIIVEMEERDGADRIMISKGNE.

Residues threonine 40–arginine 41, aspartate 101–threonine 109, and arginine 134 contribute to the substrate site. Residues valine 97–threonine 109 carry the PRPP-binding motif.

It belongs to the purine/pyrimidine phosphoribosyltransferase family. PyrR subfamily. In terms of assembly, homodimer and homohexamer; in equilibrium.

It carries out the reaction UMP + diphosphate = 5-phospho-alpha-D-ribose 1-diphosphate + uracil. In terms of biological role, regulates transcriptional attenuation of the pyrimidine nucleotide (pyr) operon in response to exogenous pyrimidines, by binding to the anti-antiterminator region of the 5' leader on pyr mRNA. This probably favors formation of a transcription terminator hairpin, leading to a reduced expression of downstream genes. Its function is as follows. Also displays a weak uracil phosphoribosyltransferase activity which is not physiologically significant. In Enterococcus faecalis (strain ATCC 700802 / V583), this protein is Bifunctional protein pyrR (pyrR).